Reading from the N-terminus, the 388-residue chain is Calcium-binding and spermatid-specific protein 1 (388 aa).

The disordered stretch occupies residues 1-20; the sequence is MAEDGLPKIYSHPPAESTKT. A Phosphothreonine; by CK2 modification is found at Thr-280. A phosphoserine mark is found at Ser-312 and Ser-344.

The protein resides in the cytoplasm. The protein localises to the mitochondrion inner membrane. It localises to the cell projection. Its subcellular location is the cilium. It is found in the flagellum. The protein resides in the cytoplasmic vesicle. The protein localises to the secretory vesicle. It localises to the acrosome. Calcium-binding protein. Essential for maintaining the structural integrity of the sperm flagella. The chain is Calcium-binding and spermatid-specific protein 1 (CABS1) from Bos taurus (Bovine).